The chain runs to 155 residues: Xanthine-guanine phosphoribosyltransferase (155 aa).

Residues 37–38 (RG), arginine 69, and 90–98 (EDLVDTGTT) each bind 5-phospho-alpha-D-ribose 1-diphosphate. Arginine 69 is a GMP binding site. Aspartate 91 lines the Mg(2+) pocket. Residues aspartate 94 and isoleucine 137 each contribute to the guanine site. Xanthine is bound by residues aspartate 94 and isoleucine 137. GMP is bound by residues 94 to 98 (DTGTT) and 136 to 137 (WI).

The protein belongs to the purine/pyrimidine phosphoribosyltransferase family. XGPT subfamily. Homotetramer. Mg(2+) is required as a cofactor.

The protein resides in the cell inner membrane. It carries out the reaction GMP + diphosphate = guanine + 5-phospho-alpha-D-ribose 1-diphosphate. It catalyses the reaction XMP + diphosphate = xanthine + 5-phospho-alpha-D-ribose 1-diphosphate. The enzyme catalyses IMP + diphosphate = hypoxanthine + 5-phospho-alpha-D-ribose 1-diphosphate. Its pathway is purine metabolism; GMP biosynthesis via salvage pathway; GMP from guanine: step 1/1. The protein operates within purine metabolism; XMP biosynthesis via salvage pathway; XMP from xanthine: step 1/1. In terms of biological role, purine salvage pathway enzyme that catalyzes the transfer of the ribosyl-5-phosphate group from 5-phospho-alpha-D-ribose 1-diphosphate (PRPP) to the N9 position of the 6-oxopurines guanine and xanthine to form the corresponding ribonucleotides GMP (guanosine 5'-monophosphate) and XMP (xanthosine 5'-monophosphate), with the release of PPi. To a lesser extent, also acts on hypoxanthine. The sequence is that of Xanthine-guanine phosphoribosyltransferase from Aeromonas hydrophila subsp. hydrophila (strain ATCC 7966 / DSM 30187 / BCRC 13018 / CCUG 14551 / JCM 1027 / KCTC 2358 / NCIMB 9240 / NCTC 8049).